The primary structure comprises 78 residues: Acyl carrier protein (78 aa).

Positions 2-77 constitute a Carrier domain; that stretch reads SSIEERVKKI…LAIDYINANL (76 aa). O-(pantetheine 4'-phosphoryl)serine is present on Ser-37.

It belongs to the acyl carrier protein (ACP) family. Post-translationally, 4'-phosphopantetheine is transferred from CoA to a specific serine of apo-ACP by AcpS. This modification is essential for activity because fatty acids are bound in thioester linkage to the sulfhydryl of the prosthetic group.

The protein resides in the cytoplasm. It participates in lipid metabolism; fatty acid biosynthesis. Functionally, carrier of the growing fatty acid chain in fatty acid biosynthesis. The chain is Acyl carrier protein from Cellvibrio japonicus (strain Ueda107) (Pseudomonas fluorescens subsp. cellulosa).